We begin with the raw amino-acid sequence, 626 residues long: Trehalase (626 aa).

Transmembrane regions (helical) follow at residues 20–40 and 45–65; these read KLFL…FIYL and SLFF…MLDS. Alpha,alpha-trehalose is bound by residues Arg224, Asp232, Asn268, Arg277, Gln279, Arg344, and Glu346. Active-site proton donor/acceptor residues include Asp380 and Glu580. Glu580 and Glu595 together coordinate alpha,alpha-trehalose.

The protein belongs to the glycosyl hydrolase 37 family. Forms homodimers. Highly expressed in flowers. Expressed at low levels in leaves and stems. Expressed in guard cells.

It is found in the cell membrane. It localises to the cytoplasm. The protein localises to the nucleus. The catalysed reaction is alpha,alpha-trehalose + H2O = alpha-D-glucose + beta-D-glucose. In terms of biological role, involved in the regulation of trehalose content by hydrolyzing trehalose to glucose. May play a role in the regulation of abscisic acid-induced stomatal closure in response to drought stress. The protein is Trehalase (TRE1) of Arabidopsis thaliana (Mouse-ear cress).